Here is an 87-residue protein sequence, read N- to C-terminus: MAHKKGVGSSRNGRDSNPKYLGVKIFGGQAIEAGNIIVRQRGTQFHPGTGVGLGRDHTLFALVDGKVEFSVKGAKKRRTVSIVSADA.

The protein belongs to the bacterial ribosomal protein bL27 family.

The polypeptide is Large ribosomal subunit protein bL27 (Stenotrophomonas maltophilia (strain K279a)).